The primary structure comprises 202 residues: Translation initiation factor IF-3 (202 aa).

Positions 178 to 202 (TPRKTPLLKKESETTEPKKALRSIN) are disordered. A compositionally biased stretch (basic and acidic residues) spans 185-196 (LKKESETTEPKK).

This sequence belongs to the IF-3 family. As to quaternary structure, monomer.

It is found in the cytoplasm. Functionally, IF-3 binds to the 30S ribosomal subunit and shifts the equilibrium between 70S ribosomes and their 50S and 30S subunits in favor of the free subunits, thus enhancing the availability of 30S subunits on which protein synthesis initiation begins. The chain is Translation initiation factor IF-3 from Prochlorococcus marinus (strain NATL1A).